The primary structure comprises 663 residues: Guanine nucleotide exchange factor subunit RGP1 (663 aa).

Phosphoserine is present on residues serine 351, serine 354, serine 357, serine 363, serine 364, and serine 370. The segment at 412–443 (GKDEDSSDPEPNDSHFSNEMVTSAESSLRSDA) is disordered. Polar residues predominate over residues 426-440 (HFSNEMVTSAESSLR).

Belongs to the RGP1 family. Forms a complex with RIC1.

The protein resides in the golgi apparatus. In terms of biological role, the RIC1-RGP1 complex acts as a guanine nucleotide exchange factor (GEF), which activates YPT6 by exchanging bound GDP for free GTP. It is thereby required for efficient fusion of endosome-derived vesicles with the Golgi. The RIC1-RGP1 participates in the recycling of SNC1, presumably by mediating fusion of endosomal vesicles with the Golgi compartment. Required for proper mitotic growth. In Saccharomyces cerevisiae (strain ATCC 204508 / S288c) (Baker's yeast), this protein is Guanine nucleotide exchange factor subunit RGP1.